A 122-amino-acid polypeptide reads, in one-letter code: Histone H2B 1 (122 aa).

Residues 1-30 are disordered; that stretch reads MPPKPSAKGAKKAAKTVTKPKDGKKRRHAR. Residue S109 is glycosylated (O-linked (GlcNAc) serine). Residue K117 forms a Glycyl lysine isopeptide (Lys-Gly) (interchain with G-Cter in ubiquitin) linkage.

The protein belongs to the histone H2B family. The nucleosome is a histone octamer containing two molecules each of H2A, H2B, H3 and H4 assembled in one H3-H4 heterotetramer and two H2A-H2B heterodimers. The octamer wraps approximately 147 bp of DNA. Post-translationally, monoubiquitination of Lys-117 gives a specific tag for epigenetic transcriptional activation and is also prerequisite for histone H3 'Lys-4' and 'Lys-79' methylation. In terms of processing, glcNAcylation at Ser-109 promotes monoubiquitination of Lys-117. It fluctuates in response to extracellular glucose, and associates with transcribed genes.

Its subcellular location is the nucleus. It is found in the chromosome. Functionally, core component of nucleosome. Nucleosomes wrap and compact DNA into chromatin, limiting DNA accessibility to the cellular machineries which require DNA as a template. Histones thereby play a central role in transcription regulation, DNA repair, DNA replication and chromosomal stability. DNA accessibility is regulated via a complex set of post-translational modifications of histones, also called histone code, and nucleosome remodeling. The chain is Histone H2B 1 (his-11) from Caenorhabditis elegans.